A 212-amino-acid polypeptide reads, in one-letter code: HTH-type transcriptional regulator RutR (212 aa).

One can recognise an HTH tetR-type domain in the interval 17–77; it reads SAKKKAILSA…AVLRQILDIW (61 aa). The segment at residues 39–58 is a DNA-binding region (H-T-H motif); it reads TRLEQIAELAGVSKTNLLYY.

In terms of assembly, homodimer.

Its function is as follows. Master transcription regulator which represses the degradation of pyrimidines (rutABCDEFG) and purines (gcl operon) for maintenance of metabolic balance between pyrimidines and purines. It also regulates the synthesis of pyrimidine nucleotides and arginine from glutamine (carAB) and the supply of glutamate (gadABWX). This Escherichia coli O6:H1 (strain CFT073 / ATCC 700928 / UPEC) protein is HTH-type transcriptional regulator RutR (rutR).